Here is an 834-residue protein sequence, read N- to C-terminus: Translation factor GUF1 homolog, mitochondrial (834 aa).

Residues 1–66 (MKLCGVRSSG…RPLLAEPRRY (66 aa)) constitute a mitochondrion transit peptide. The tr-type G domain maps to 129–314 (ACIRNVSVVA…HIIDKVPPPC (186 aa)). GTP-binding positions include 138-145 (AHVDHGKT), 205-209 (DTPGH), and 259-262 (TKMD). Disordered stretches follow at residues 363–385 (GAASAPVSTASSVSSGTAPASGG) and 476–507 (TGSPATASRTKPATAAETASSDDASGSGSSSV). Low complexity predominate over residues 488 to 507 (ATAAETASSDDASGSGSSSV).

The protein belongs to the TRAFAC class translation factor GTPase superfamily. Classic translation factor GTPase family. LepA subfamily.

It is found in the mitochondrion inner membrane. It catalyses the reaction GTP + H2O = GDP + phosphate + H(+). Functionally, promotes mitochondrial protein synthesis. May act as a fidelity factor of the translation reaction, by catalyzing a one-codon backward translocation of tRNAs on improperly translocated ribosomes. Binds to mitochondrial ribosomes in a GTP-dependent manner. The polypeptide is Translation factor GUF1 homolog, mitochondrial (Leishmania infantum).